Reading from the N-terminus, the 339-residue chain is Ferrochelatase (339 aa).

His-209 and Glu-290 together coordinate Fe cation.

It belongs to the ferrochelatase family.

It is found in the cytoplasm. It carries out the reaction heme b + 2 H(+) = protoporphyrin IX + Fe(2+). It participates in porphyrin-containing compound metabolism; protoheme biosynthesis; protoheme from protoporphyrin-IX: step 1/1. Functionally, catalyzes the ferrous insertion into protoporphyrin IX. This Rhizobium meliloti (strain 1021) (Ensifer meliloti) protein is Ferrochelatase.